A 231-amino-acid chain; its full sequence is Large ribosomal subunit protein uL1 (231 aa).

Belongs to the universal ribosomal protein uL1 family. Part of the 50S ribosomal subunit.

In terms of biological role, binds directly to 23S rRNA. The L1 stalk is quite mobile in the ribosome, and is involved in E site tRNA release. Functionally, protein L1 is also a translational repressor protein, it controls the translation of the L11 operon by binding to its mRNA. The polypeptide is Large ribosomal subunit protein uL1 (Saccharophagus degradans (strain 2-40 / ATCC 43961 / DSM 17024)).